The following is a 253-amino-acid chain: MAVTRPPERSAEAVELIEGAGGRALVAPTLELKEAHTESLREVCRRADEWDLVIFTSQAAVESLFQLCREFAGKIRKDCLVAVIGPRTARVAGEHGLRVDIVPEDYTAEGLLDALTGLNIEGWKVALPRTLSARKVLPRGLEMMGAEVLVAEAYRSGLPEDTGPAEELIDGLLDGKVDAVTFTSPLTVENLFKIAGNRRKELIEVLKRVKVAAIGPITLRKLEEHGITAVTPERYTVKDMIAALAVSMGEDVD.

This sequence belongs to the uroporphyrinogen-III synthase family.

It catalyses the reaction hydroxymethylbilane = uroporphyrinogen III + H2O. It functions in the pathway porphyrin-containing compound metabolism; protoporphyrin-IX biosynthesis; coproporphyrinogen-III from 5-aminolevulinate: step 3/4. Its function is as follows. Catalyzes cyclization of the linear tetrapyrrole, hydroxymethylbilane, to the macrocyclic uroporphyrinogen III. This chain is Putative uroporphyrinogen-III synthase (hemD), found in Methanothermobacter thermautotrophicus (strain ATCC 29096 / DSM 1053 / JCM 10044 / NBRC 100330 / Delta H) (Methanobacterium thermoautotrophicum).